The following is a 402-amino-acid chain: MRMSLVFACLAMGLALTFAEGSASSHHQSLAARLATDFGVKVFRQVVQASKDRNVVFSPYGVASVLAMLQLTTAGDTQQQIQEAMQFKIEEKGMAPALRQLYKELMGPWNKDEISTADAIFVQRDLKLVQGFMPYFFRLFRTTVKQVDFSEMDRARFIINDWVKRHTKGMINDLLGQGAVDQLTRLVLVNALYFNGQWKTPFPEKSTHHRLFHKSDGSTVSVPMMAQTNKFNYTEFSTPDGHYYDILELPYHGNTLSMFIAAPYEKEVPLSALTSILDAQLISQWKGNMTRLTRLLVLPKFSLESEVDLRRPLENLGMTDMFRPNQADFSSLSDQELLYMSQALQKVKIEVNESGTVASSSTAIIVSARMAPEEIIMDRPFLFVVRHNPTGTVLFMGQVMEP.

An N-terminal signal peptide occupies residues 1 to 23; that stretch reads MRMSLVFACLAMGLALTFAEGSA. N-linked (GlcNAc...) asparagine glycosylation is found at Asn-232, Asn-288, and Asn-352.

This sequence belongs to the serpin family. In terms of assembly, forms a heterodimer with TMPRSS7. Interacts with VTN. Binds LRP1B; binding is followed by internalization and degradation. Interacts with PPP1CB. In complex with PLAU/uPA, interacts with PLAUR/uPAR. Interacts with SORL1 and LRP1, either alone or in complex with PLAU; these interactions are abolished in the presence of LRPAP1/RAP. The ternary complex composed of PLAUR-PLAU-PAI1 also interacts with SORL1. Interacts with PLAT/tPA. Also interacts with SORL1, when complexed to PLAT/tPA.

Its subcellular location is the secreted. Serine protease inhibitor. Inhibits TMPRSS7. Is a primary inhibitor of tissue-type plasminogen activator (PLAT) and urokinase-type plasminogen activator (PLAU). As PLAT inhibitor, it is required for fibrinolysis down-regulation and is responsible for the controlled degradation of blood clots. As PLAU inhibitor, it is involved in the regulation of cell adhesion and spreading. Acts as a regulator of cell migration, independently of its role as protease inhibitor. It is required for stimulation of keratinocyte migration during cutaneous injury repair. It is involved in cellular and replicative senescence. Plays a role in alveolar type 2 cells senescence in the lung. Is involved in the regulation of cementogenic differentiation of periodontal ligament stem cells, and regulates odontoblast differentiation and dentin formation during odontogenesis. This chain is Plasminogen activator inhibitor 1 (SERPINE1), found in Sus scrofa (Pig).